A 219-amino-acid chain; its full sequence is Protein matrimony (219 aa).

Residues 74-99 (PPAKAHPHPHQHQHHHHHHKHIHRTQ) are compositionally biased toward basic residues. The disordered stretch occupies residues 74–104 (PPAKAHPHPHQHQHHHHHHKHIHRTQLKPPP). The SAM domain occupies 159 to 219 (NHAANVEQIL…NRIMDVLQTL (61 aa)).

In terms of assembly, interacts with polo. Interacts with cort. Post-translationally, probably ubiquitinated: degraded during the oocyte-to-embryo transition by the anaphase promoting complex/cyclosome (APC/C) containing cort protein.

It localises to the nucleus. Its subcellular location is the chromosome. In terms of biological role, polo kinase inhibitor required to maintain G2 arrest in the meiotic cell cycle in females. Holds heterochromatically paired homologs together from the end of pachytene until metaphase I. Haploinsufficient locus for homologous achiasmate segregation and may be required for the maintenance of heterochromatic pairings. This Drosophila yakuba (Fruit fly) protein is Protein matrimony (mtrm).